A 533-amino-acid polypeptide reads, in one-letter code: Capsid protein VP1 (533 aa).

The segment at 333–353 is disordered; it reads TIDLQQNPVPQTSSSTTDSPQ.

It belongs to the microviridae F protein family.

Its subcellular location is the virion. The protein localises to the host cytoplasm. Functionally, assembles to form an icosahedral capsid with a T=1 symmetry. The polypeptide is Capsid protein VP1 (Bdellovibrio bacteriovorus (Bacteriophage phiMH2K)).